Here is a 392-residue protein sequence, read N- to C-terminus: 8-amino-7-oxononanoate synthase (392 aa).

Substrate is bound at residue R21. A pyridoxal 5'-phosphate-binding site is contributed by 108-109 (GF). H133 provides a ligand contact to substrate. Residues S181, 206 to 209 (DDAH), and 237 to 240 (TLSK) contribute to the pyridoxal 5'-phosphate site. K240 is modified (N6-(pyridoxal phosphate)lysine). T354 is a substrate binding site.

The protein belongs to the class-II pyridoxal-phosphate-dependent aminotransferase family. BioF subfamily. In terms of assembly, homodimer. The cofactor is pyridoxal 5'-phosphate.

The enzyme catalyses 6-carboxyhexanoyl-[ACP] + L-alanine + H(+) = (8S)-8-amino-7-oxononanoate + holo-[ACP] + CO2. It functions in the pathway cofactor biosynthesis; biotin biosynthesis. Catalyzes the decarboxylative condensation of pimeloyl-[acyl-carrier protein] and L-alanine to produce 8-amino-7-oxononanoate (AON), [acyl-carrier protein], and carbon dioxide. This chain is 8-amino-7-oxononanoate synthase, found in Symbiobacterium thermophilum (strain DSM 24528 / JCM 14929 / IAM 14863 / T).